The sequence spans 232 residues: MKGFKIAIDGPAASGKSTICKLIAEKLNCVHIDTGLMFRVITLYLIKNKVNWAQITEENYLKLLLNNCNIYYEKNHIYCNYQKMCLEIKLKRIEIDNKVSLVASLPFIRQKLLLLQQEIIKNNPYLIMDGRDIGTIVMPNADLKIFLTANIEQRILRRVNEFKSNKSVNELQKITNNIKLRDHKDFNRLISPLKKAEDAILLDTTDINIIETVNQIHNLILHKKKLLNQNEF.

10 to 18 lines the ATP pocket; it reads GPAASGKST.

It belongs to the cytidylate kinase family. Type 1 subfamily.

Its subcellular location is the cytoplasm. The catalysed reaction is CMP + ATP = CDP + ADP. The enzyme catalyses dCMP + ATP = dCDP + ADP. This is Cytidylate kinase from Phytoplasma mali (strain AT).